Consider the following 578-residue polypeptide: SWR1 complex bromodomain subunit bdf1 (578 aa).

Positions 1-18 (MSSESRENEVKAETKDEI) are enriched in basic and acidic residues. Disordered regions lie at residues 1 to 89 (MSSE…PPPQ), 192 to 254 (DAEQ…RKNN), and 504 to 578 (ADSS…SESA). Polar residues predominate over residues 22–36 (GSPQLNGDNNIQSSD). 2 stretches are compositionally biased toward basic and acidic residues: residues 37–52 (GHND…KRDS) and 60–77 (LKQE…EPTV). The region spanning 84 to 190 (GMPPPQQKYC…EVFERQLKQL (107 aa)) is the Bromo 1 domain. Over residues 219–242 (NSSVSSTSASVAASTAPKAASPAV) the composition is skewed to low complexity. Residues S221, S223, and S224 each carry the phosphoserine modification. T225 bears the Phosphothreonine mark. S226 and S239 each carry phosphoserine. The 110-residue stretch at 251-360 (RKNNSQMRFC…NVFKEKWEAR (110 aa)) folds into the Bromo 2 domain. The 81-residue stretch at 430 to 510 (RRDLTKEYGP…KPDADSSEPA (81 aa)) folds into the NET domain. S511 carries the post-translational modification Phosphoserine. The segment covering 526 to 537 (VLSETEQAEKIR) has biased composition (basic and acidic residues). Residues 550-563 (TSPTSPESNNAANV) show a composition bias toward polar residues. Residues 566 to 578 (SESDNESESSESA) are compositionally biased toward acidic residues.

This sequence belongs to the BET family. In terms of assembly, component of the SWR1 chromatin-remodeling complex.

Its subcellular location is the nucleus. Component of the SWR1 complex which mediates the ATP-dependent exchange of histone H2A for the H2A variant HZT1 leading to transcriptional regulation of selected genes by chromatin remodeling. The sequence is that of SWR1 complex bromodomain subunit bdf1 (bdf1) from Schizosaccharomyces pombe (strain 972 / ATCC 24843) (Fission yeast).